We begin with the raw amino-acid sequence, 198 residues long: tRNA (pseudouridine(54)-N(1))-methyltransferase (198 aa).

S-adenosyl-L-methionine-binding positions include leucine 130, glycine 153, 176–181 (LSPLEL), and cysteine 186.

The protein belongs to the methyltransferase superfamily. TrmY family. Homodimer.

It is found in the cytoplasm. The enzyme catalyses pseudouridine(54) in tRNA + S-adenosyl-L-methionine = N(1)-methylpseudouridine(54) in tRNA + S-adenosyl-L-homocysteine + H(+). In terms of biological role, specifically catalyzes the N1-methylation of pseudouridine at position 54 (Psi54) in tRNAs. In Methanococcus maripaludis (strain C7 / ATCC BAA-1331), this protein is tRNA (pseudouridine(54)-N(1))-methyltransferase.